The following is a 118-amino-acid chain: Co-chaperonin GroES (118 aa).

Belongs to the GroES chaperonin family. As to quaternary structure, heptamer of 7 subunits arranged in a ring. Interacts with the chaperonin GroEL.

It localises to the cytoplasm. Functionally, together with the chaperonin GroEL, plays an essential role in assisting protein folding. The GroEL-GroES system forms a nano-cage that allows encapsulation of the non-native substrate proteins and provides a physical environment optimized to promote and accelerate protein folding. GroES binds to the apical surface of the GroEL ring, thereby capping the opening of the GroEL channel. The polypeptide is Co-chaperonin GroES (Helicobacter pylori (strain P12)).